A 436-amino-acid chain; its full sequence is Hydrogenobyrinate a,c-diamide synthase (436 aa).

Positions 244 to 435 (RIAVARDDAF…MHVIDFSGEA (192 aa)) constitute a GATase cobBQ-type domain. Residue cysteine 327 is the Nucleophile of the active site.

It belongs to the CobB/CbiA family. Mg(2+) serves as cofactor.

The catalysed reaction is hydrogenobyrinate + 2 L-glutamine + 2 ATP + 2 H2O = hydrogenobyrinate a,c-diamide + 2 L-glutamate + 2 ADP + 2 phosphate + 2 H(+). The protein operates within cofactor biosynthesis; adenosylcobalamin biosynthesis; cob(II)yrinate a,c-diamide from precorrin-2 (aerobic route): step 9/10. Its function is as follows. Catalyzes the ATP-dependent amidation of the two carboxylate groups at positions a and c of hydrogenobyrinate, using either L-glutamine or ammonia as the nitrogen source. The protein is Hydrogenobyrinate a,c-diamide synthase of Brucella abortus biovar 1 (strain 9-941).